The following is a 147-amino-acid chain: Prefoldin subunit alpha (147 aa).

Belongs to the prefoldin subunit alpha family. As to quaternary structure, heterohexamer of two alpha and four beta subunits.

It localises to the cytoplasm. Functionally, molecular chaperone capable of stabilizing a range of proteins. Seems to fulfill an ATP-independent, HSP70-like function in archaeal de novo protein folding. The chain is Prefoldin subunit alpha (pfdA) from Saccharolobus solfataricus (strain ATCC 35092 / DSM 1617 / JCM 11322 / P2) (Sulfolobus solfataricus).